A 68-amino-acid polypeptide reads, in one-letter code: Sec-independent protein translocase protein TatA (68 aa).

Residues 1–21 traverse the membrane as a helical segment; the sequence is MGSFSIWHWLIVLAVVLLLFG. The interval 42 to 68 is disordered; sequence GMGDDEVASADKSVDGKTVDHKSDEVR. The span at 53-68 shows a compositional bias: basic and acidic residues; the sequence is KSVDGKTVDHKSDEVR.

It belongs to the TatA/E family. The Tat system comprises two distinct complexes: a TatABC complex, containing multiple copies of TatA, TatB and TatC subunits, and a separate TatA complex, containing only TatA subunits. Substrates initially bind to the TatABC complex, which probably triggers association of the separate TatA complex to form the active translocon.

It localises to the cell inner membrane. In terms of biological role, part of the twin-arginine translocation (Tat) system that transports large folded proteins containing a characteristic twin-arginine motif in their signal peptide across membranes. TatA could form the protein-conducting channel of the Tat system. This chain is Sec-independent protein translocase protein TatA, found in Rhizobium meliloti (strain 1021) (Ensifer meliloti).